The following is a 491-amino-acid chain: ATP-dependent protease ATPase subunit HslU (491 aa).

ATP is bound by residues Ile-34, 76-81 (GVGKTE), Asp-296, Glu-364, and Arg-436.

Belongs to the ClpX chaperone family. HslU subfamily. A double ring-shaped homohexamer of HslV is capped on each side by a ring-shaped HslU homohexamer. The assembly of the HslU/HslV complex is dependent on binding of ATP.

The protein resides in the cytoplasm. In terms of biological role, ATPase subunit of a proteasome-like degradation complex; this subunit has chaperone activity. The binding of ATP and its subsequent hydrolysis by HslU are essential for unfolding of protein substrates subsequently hydrolyzed by HslV. HslU recognizes the N-terminal part of its protein substrates and unfolds these before they are guided to HslV for hydrolysis. This Chlorobaculum tepidum (strain ATCC 49652 / DSM 12025 / NBRC 103806 / TLS) (Chlorobium tepidum) protein is ATP-dependent protease ATPase subunit HslU.